The chain runs to 1391 residues: DNA-directed RNA polymerase subunit beta (1391 aa).

Belongs to the RNA polymerase beta chain family. In terms of assembly, the RNAP catalytic core consists of 2 alpha, 1 beta, 1 beta' and 1 omega subunit. When a sigma factor is associated with the core the holoenzyme is formed, which can initiate transcription.

It catalyses the reaction RNA(n) + a ribonucleoside 5'-triphosphate = RNA(n+1) + diphosphate. Its function is as follows. DNA-dependent RNA polymerase catalyzes the transcription of DNA into RNA using the four ribonucleoside triphosphates as substrates. In Granulibacter bethesdensis (strain ATCC BAA-1260 / CGDNIH1), this protein is DNA-directed RNA polymerase subunit beta.